Reading from the N-terminus, the 117-residue chain is Putative phosphotransferase enzyme IIB component MPN_268 (117 aa).

A helical transmembrane segment spans residues 1-21 (MKVLLWIGYVLSFGLLYLYLV). Residues 42–117 (PFAVRDFIAA…QLKQQIENER (76 aa)) enclose the PTS EIIB type-1 domain.

Its subcellular location is the membrane. The phosphoenolpyruvate-dependent sugar phosphotransferase system (PTS), a major carbohydrate active -transport system, catalyzes the phosphorylation of incoming sugar substrates concomitant with their translocation across the cell membrane. The protein is Putative phosphotransferase enzyme IIB component MPN_268 of Mycoplasma pneumoniae (strain ATCC 29342 / M129 / Subtype 1) (Mycoplasmoides pneumoniae).